A 583-amino-acid chain; its full sequence is R-linalool synthase QH5, chloroplastic (583 aa).

A chloroplast-targeting transit peptide spans 1–40; sequence MASISLFPYSILKQTSPLARGTAYNRIYSTKTTGITVDVA. (2E)-geranyl diphosphate-binding residues include arginine 298, aspartate 335, aspartate 339, arginine 476, and aspartate 479. Mg(2+) contacts are provided by aspartate 335 and aspartate 339. The DDXXD motif motif lies at 335 to 339; the sequence is DDVYD. Mg(2+) is bound by residues aspartate 479, threonine 483, and glutamate 487. Aspartate 492 serves as a coordination point for K(+).

It belongs to the terpene synthase family. Tpsb subfamily. Mg(2+) is required as a cofactor. Requires Mn(2+) as cofactor. It depends on K(+) as a cofactor. Expressed in every aerial organ except for the stem stele of mature plants. Not detected in roots.

The protein localises to the plastid. It is found in the chloroplast. It carries out the reaction (2E)-geranyl diphosphate + H2O = (R)-linalool + diphosphate. The protein operates within secondary metabolite biosynthesis; terpenoid biosynthesis. Functionally, monoterpene synthase that catalyzes the formation of (3R)-linalool from geranyl diphosphate, but not from isopentenyl diphosphate, dimethylallyl diphosphate, chrysanthemyl diphosphate, farnesyl diphosphate, (+)-copalyl diphosphate or geranylgeranyl diphosphate. The protein is R-linalool synthase QH5, chloroplastic of Artemisia annua (Sweet wormwood).